Here is a 443-residue protein sequence, read N- to C-terminus: MITIKKGLDLPIAGKPEQVIRDGNAVTEVAMLGEEYVGMRPSMKVREGDTVKKGQVLFEDKKNPGVVFTAPASGTVTAINRGAKRVLQSVVIRVGGNEQVTFEKYDVAALNQLTGEQVRRNLQASGLWTALRTRPFSKVPAIDAVPSSIFVNAMDSNPLAADPAVIINEYAEDFTNGLTVLTRLHDKVNLVKSAGSNITAVGAVKVHEFGGKHPAGLVGTHIHFIDPVSLTKTVWHLNYQDVIAIGKLFTTGELFVERVVSLAGPQVKNPRLVRTVSGANLTQLTENELNAGENRVISGSVLYGAKAEGPHNYLGRYALQVSVLAEDTEKEFFGWISPQANKFSITRTVLGHFGKKLFNFTTAENGGHRAMVPIGSYERVMPLDILPTLLLRDLEVGDTDSAQSLGCLELDEEDLALCTFVDPGKADYGSFLRQALDKIEKEG.

The protein belongs to the NqrA family. As to quaternary structure, composed of six subunits; NqrA, NqrB, NqrC, NqrD, NqrE and NqrF.

The enzyme catalyses a ubiquinone + n Na(+)(in) + NADH + H(+) = a ubiquinol + n Na(+)(out) + NAD(+). In terms of biological role, NQR complex catalyzes the reduction of ubiquinone-1 to ubiquinol by two successive reactions, coupled with the transport of Na(+) ions from the cytoplasm to the periplasm. NqrA to NqrE are probably involved in the second step, the conversion of ubisemiquinone to ubiquinol. In Actinobacillus succinogenes (strain ATCC 55618 / DSM 22257 / CCUG 43843 / 130Z), this protein is Na(+)-translocating NADH-quinone reductase subunit A.